The sequence spans 81 residues: AVITGACERDLQCGKGTCCAVSLWIKSVRVCTPVGTSGEDCHPASHKIPFSGQRMHHTCPCAPNLACVQTSPKKFKCLSKS.

Disulfide bonds link Cys7–Cys19, Cys13–Cys31, Cys18–Cys59, Cys41–Cys67, and Cys61–Cys77.

The protein belongs to the AVIT (prokineticin) family. Expressed by the venom gland.

It localises to the secreted. In terms of biological role, potent agonist for both PKR1/PROKR1 and PKR2/PROKR2. Potently contracts gastrointestinal (GI) smooth muscle. The polypeptide is Toxin MIT1 (Dendroaspis polylepis polylepis (Black mamba)).